The primary structure comprises 193 residues: NAD(P)H-quinone oxidoreductase subunit I (193 aa).

4Fe-4S ferredoxin-type domains are found at residues 55–84 (GRIHFEFDKCISCEVCVRVCPINLPVVDWE) and 95–124 (KHYSIDFGVCIFCANCVEYCPTNCLSVTEE). Residues Cys64, Cys67, Cys70, Cys74, Cys104, Cys107, Cys110, and Cys114 each coordinate [4Fe-4S] cluster.

Belongs to the complex I 23 kDa subunit family. In terms of assembly, NDH-1 is composed of at least 11 different subunits. [4Fe-4S] cluster serves as cofactor.

The protein localises to the cellular thylakoid membrane. It catalyses the reaction a plastoquinone + NADH + (n+1) H(+)(in) = a plastoquinol + NAD(+) + n H(+)(out). The enzyme catalyses a plastoquinone + NADPH + (n+1) H(+)(in) = a plastoquinol + NADP(+) + n H(+)(out). Its function is as follows. NDH-1 shuttles electrons from an unknown electron donor, via FMN and iron-sulfur (Fe-S) centers, to quinones in the respiratory and/or the photosynthetic chain. The immediate electron acceptor for the enzyme in this species is believed to be plastoquinone. Couples the redox reaction to proton translocation, and thus conserves the redox energy in a proton gradient. The protein is NAD(P)H-quinone oxidoreductase subunit I of Cyanothece sp. (strain PCC 7425 / ATCC 29141).